The chain runs to 421 residues: Serine--tRNA ligase (421 aa).

Residue Thr-225 to Glu-227 participates in L-serine binding. ATP-binding positions include Arg-256–Glu-258 and Val-272. Glu-279 is a binding site for L-serine. Glu-345–Ser-348 is a binding site for ATP. An L-serine-binding site is contributed by Thr-380.

Belongs to the class-II aminoacyl-tRNA synthetase family. Type-1 seryl-tRNA synthetase subfamily. In terms of assembly, homodimer. A single tRNA molecule binds across the dimer.

The protein localises to the cytoplasm. It carries out the reaction tRNA(Ser) + L-serine + ATP = L-seryl-tRNA(Ser) + AMP + diphosphate + H(+). The enzyme catalyses tRNA(Sec) + L-serine + ATP = L-seryl-tRNA(Sec) + AMP + diphosphate + H(+). Its pathway is aminoacyl-tRNA biosynthesis; selenocysteinyl-tRNA(Sec) biosynthesis; L-seryl-tRNA(Sec) from L-serine and tRNA(Sec): step 1/1. Catalyzes the attachment of serine to tRNA(Ser). Is also probably able to aminoacylate tRNA(Sec) with serine, to form the misacylated tRNA L-seryl-tRNA(Sec), which will be further converted into selenocysteinyl-tRNA(Sec). The chain is Serine--tRNA ligase (serS) from Thermus thermophilus (strain ATCC BAA-163 / DSM 7039 / HB27).